Consider the following 310-residue polypeptide: Glutaminase (310 aa).

The substrate site is built by serine 66, asparagine 117, glutamate 161, asparagine 168, tyrosine 192, tyrosine 244, and valine 262. Lysine 294 carries the post-translational modification N6-acetyllysine.

Belongs to the glutaminase family. In terms of assembly, homotetramer.

It carries out the reaction L-glutamine + H2O = L-glutamate + NH4(+). The polypeptide is Glutaminase (Escherichia coli O81 (strain ED1a)).